The sequence spans 417 residues: Phosphoglycerate kinase 2 (417 aa).

N-acetylserine is present on Ser-2. Phosphoserine occurs at positions 2 and 4. N6-acetyllysine is present on Lys-11. Residues Val-23, Asp-24, Phe-25, Asn-26, Gln-38, and Arg-39 each coordinate (2R)-3-phosphoglycerate. Lys-48 carries the N6-acetyllysine modification. Ser-62, His-63, Gly-65, and Arg-66 together coordinate (2R)-3-phosphoglycerate. Residues Lys-75, Lys-86, and Lys-97 each carry the N6-acetyllysine modification. 2 residues coordinate (2R)-3-phosphoglycerate: Leu-122 and Arg-123. An N6-acetyllysine mark is found at Lys-131 and Lys-146. (2R)-3-phosphoglycerate is bound by residues His-170 and Arg-171. Tyr-196 is modified (phosphotyrosine). Lys-199 carries the N6-acetyllysine modification. Gly-214 is an ADP binding site. Gly-214 lines the CDP pocket. Residues Ala-215 and Lys-216 each coordinate AMP. Ala-215 contacts ATP. Ala-215 contacts Mg(2+). Residues Ala-218 and Asp-219 each coordinate Mg(2+). Asp-219 provides a ligand contact to CDP. Lys-220 lines the AMP pocket. Lys-220 is an ATP binding site. Gly-238 lines the ADP pocket. Gly-238 lines the CDP pocket. Gly-239 provides a ligand contact to AMP. Residue Gly-239 coordinates ATP. 2 positions are modified to N6-acetyllysine: Lys-267 and Lys-291. Residue Gly-313 participates in AMP binding. Residue Gly-313 coordinates ATP. CDP-binding residues include Gly-338 and Phe-343. Position 343 (Phe-343) interacts with ADP. Glu-344 provides a ligand contact to AMP. Residues Glu-344, Asp-375, and Thr-376 each contribute to the ATP site. Asp-375 serves as a coordination point for Mg(2+).

Belongs to the phosphoglycerate kinase family. In terms of assembly, monomer. Mg(2+) serves as cofactor.

Its subcellular location is the cytoplasm. The enzyme catalyses (2R)-3-phosphoglycerate + ATP = (2R)-3-phospho-glyceroyl phosphate + ADP. It participates in carbohydrate degradation; glycolysis; pyruvate from D-glyceraldehyde 3-phosphate: step 2/5. Functionally, essential for sperm motility and male fertility but is not required for the completion of spermatogenesis. The protein is Phosphoglycerate kinase 2 (PGK2) of Macaca fascicularis (Crab-eating macaque).